We begin with the raw amino-acid sequence, 290 residues long: Phosphatidylglycerol--prolipoprotein diacylglyceryl transferase (290 aa).

7 consecutive transmembrane segments (helical) span residues Val-21–Ala-41, Leu-60–Tyr-80, Trp-96–Phe-116, Phe-124–Leu-144, Ser-198–Ile-218, Gly-225–Phe-245, and Ile-260–Trp-280. An a 1,2-diacyl-sn-glycero-3-phospho-(1'-sn-glycerol)-binding site is contributed by Arg-143.

This sequence belongs to the Lgt family.

It localises to the cell inner membrane. It catalyses the reaction L-cysteinyl-[prolipoprotein] + a 1,2-diacyl-sn-glycero-3-phospho-(1'-sn-glycerol) = an S-1,2-diacyl-sn-glyceryl-L-cysteinyl-[prolipoprotein] + sn-glycerol 1-phosphate + H(+). The protein operates within protein modification; lipoprotein biosynthesis (diacylglyceryl transfer). Its function is as follows. Catalyzes the transfer of the diacylglyceryl group from phosphatidylglycerol to the sulfhydryl group of the N-terminal cysteine of a prolipoprotein, the first step in the formation of mature lipoproteins. The sequence is that of Phosphatidylglycerol--prolipoprotein diacylglyceryl transferase from Enterobacter sp. (strain 638).